The primary structure comprises 132 residues: Small ribosomal subunit protein uS8 (132 aa).

Belongs to the universal ribosomal protein uS8 family. In terms of assembly, part of the 30S ribosomal subunit. Contacts proteins S5 and S12.

In terms of biological role, one of the primary rRNA binding proteins, it binds directly to 16S rRNA central domain where it helps coordinate assembly of the platform of the 30S subunit. The chain is Small ribosomal subunit protein uS8 from Rickettsia bellii (strain OSU 85-389).